A 499-amino-acid polypeptide reads, in one-letter code: Serine/threonine-protein phosphatase 5 (499 aa).

The interval 1–24 (MAMAEGERTECAETPRDEPPADGT) is disordered. Ala-2 bears the N-acetylalanine mark. TPR repeat units follow at residues 28–61 (AEELKTQANDYFKAKDYENAIKFYSQAIELNPGN), 62–95 (AIYYGNRSLAYLRTECYGYALGDATRAIELDKKY), and 96–129 (IKGYYRRAASNMALGKFRAALRDYETVVKVKPND). A catalytic region spans residues 184 to 499 (GKVTITFMKD…ANTLLQLGMM (316 aa)). 3 residues coordinate Mn(2+): Asp-242, His-244, and Asp-271. His-244 lines the substrate pocket. Residues Arg-275 and 303–304 (NH) each bind substrate. Residue Asn-303 coordinates Mn(2+). Catalysis depends on His-304, which acts as the Proton donor/acceptor. His-352 contributes to the Mn(2+) binding site. Positions 400 and 427 each coordinate substrate. Mn(2+) is bound at residue His-427. Positions 495–499 (QLGMM) are required for autoinhibition.

Belongs to the PPP phosphatase family. PP-5 (PP-T) subfamily. In terms of assembly, probably forms a complex composed of chaperones HSP90 and HSP70, co-chaperones STIP1/HOP, CDC37, PPP5C, PTGES3/p23, TSC1 and client protein TSC2. Probably forms a complex composed of chaperones HSP90 and HSP70, co-chaperones CDC37, PPP5C, TSC1 and client protein TSC2, CDK4, AKT, RAF1 and NR3C1; this complex does not contain co-chaperones STIP1/HOP and PTGES3/p23. Part of a complex with HSP90/HSP90AA1 and steroid receptors. Interacts (via TPR repeats) with HSP90AA1 (via TPR repeat-binding motif) or HSPA1A/HSPA1B; the interaction is direct and activates the phosphatase activity. Dissociates from HSPA1A/HSPA1B and HSP90AA1 in response to arachidonic acid. Interacts with CPNE1 (via VWFA domain). Interacts with CDC16, CDC27. Interacts with KLHDC10 (via the 6 Kelch repeats); inhibits the phosphatase activity on MAP3K5. Interacts with ATM and ATR; both interactions are induced by DNA damage and enhance ATM and ATR kinase activity. Interacts with RAD17; reduced by DNA damage. Interacts with nuclear receptors such as NR3C1/GCR and PPARG (activated by agonist); regulates their transactivation activities. Interacts (via TPR repeats) with S100 proteins S100A1, S100A2, S100A6, S100B and S100P; the interactions are calcium-dependent, strongly activate PPP5C phosphatase activity and compete with HSP90AA1 and MAP3K5 interactions. Interacts with SMAD2 and SMAD3 but not with SMAD1; decreases SMAD3 phosphorylation and protein levels. Interacts (via TPR repeats) with CRY1 and CRY2; the interaction with CRY2 down-regulates the phosphatase activity on CSNK1E. Interacts (via TPR repeats) with the active form of RAC1, GNA12 or GNA13; these interactions activate the phosphatase activity and translocate PPP5C to the cell membrane. Interacts with FLCN. The cofactor is Mg(2+). Mn(2+) is required as a cofactor. Activated by at least two different proteolytic cleavages producing a 56 kDa and a 50 kDa form. As to expression, expressed in liver (at protein level) and brain, enriched in suprachiasmatic nuclei.

It localises to the nucleus. Its subcellular location is the cytoplasm. The protein resides in the cell membrane. The enzyme catalyses O-phospho-L-seryl-[protein] + H2O = L-seryl-[protein] + phosphate. The catalysed reaction is O-phospho-L-threonyl-[protein] + H2O = L-threonyl-[protein] + phosphate. Its activity is regulated as follows. Autoinhibited. In the autoinhibited state, the TPR domain interacts with the catalytic region and prevents substrate access to the catalytic pocket. Allosterically activated by various polyunsaturated fatty acids, free long-chain fatty-acids and long-chain fatty acyl-CoA esters, arachidonic acid being the most effective activator. HSP90A and probably RAC1, GNA12 and GNA13 can also release the autoinhibition by the TPR repeat. Activation by RAC1, GNA12 and GNA13 is synergistic with the one produced by fatty acids binding. Inhibited by okadaic acid. In terms of biological role, serine/threonine-protein phosphatase that dephosphorylates a myriad of proteins involved in different signaling pathways including the kinases CSNK1E, ASK1/MAP3K5, PRKDC and RAF1, the nuclear receptors NR3C1, PPARG, ESR1 and ESR2, SMAD proteins and TAU/MAPT. Implicated in wide ranging cellular processes, including apoptosis, differentiation, DNA damage response, cell survival, regulation of ion channels or circadian rhythms, in response to steroid and thyroid hormones, calcium, fatty acids, TGF-beta as well as oxidative and genotoxic stresses. Participates in the control of DNA damage response mechanisms such as checkpoint activation and DNA damage repair through, for instance, the regulation ATM/ATR-signaling and dephosphorylation of PRKDC and TP53BP1. Inhibits ASK1/MAP3K5-mediated apoptosis induced by oxidative stress. Plays a positive role in adipogenesis, mainly through the dephosphorylation and activation of PPARG transactivation function. Also dephosphorylates and inhibits the anti-adipogenic effect of NR3C1. Regulates the circadian rhythms, through the dephosphorylation and activation of CSNK1E. May modulate TGF-beta signaling pathway by the regulation of SMAD3 phosphorylation and protein expression levels. Dephosphorylates and may play a role in the regulation of TAU/MAPT. Through their dephosphorylation, may play a role in the regulation of ions channels such as KCNH2. Dephosphorylate FNIP1, disrupting interaction with HSP90AA1/Hsp90. The polypeptide is Serine/threonine-protein phosphatase 5 (Ppp5c) (Mus musculus (Mouse)).